A 102-amino-acid polypeptide reads, in one-letter code: NAD(P)H-quinone oxidoreductase subunit 4L (102 aa).

3 consecutive transmembrane segments (helical) span residues 4–24 (LQFFLVVAAILFCIGIYGLIV), 33–53 (MSIELMLNAVNLNFMAFSNFV), and 65–85 (VFVITVAAAEAAVGLAIVLGI).

The protein belongs to the complex I subunit 4L family. In terms of assembly, NDH-1 can be composed of about 15 different subunits; different subcomplexes with different compositions have been identified which probably have different functions.

It localises to the cellular thylakoid membrane. It catalyses the reaction a plastoquinone + NADH + (n+1) H(+)(in) = a plastoquinol + NAD(+) + n H(+)(out). The enzyme catalyses a plastoquinone + NADPH + (n+1) H(+)(in) = a plastoquinol + NADP(+) + n H(+)(out). NDH-1 shuttles electrons from an unknown electron donor, via FMN and iron-sulfur (Fe-S) centers, to quinones in the respiratory and/or the photosynthetic chain. The immediate electron acceptor for the enzyme in this species is believed to be plastoquinone. Couples the redox reaction to proton translocation, and thus conserves the redox energy in a proton gradient. Cyanobacterial NDH-1 also plays a role in inorganic carbon-concentration. The polypeptide is NAD(P)H-quinone oxidoreductase subunit 4L (Synechococcus sp. (strain JA-3-3Ab) (Cyanobacteria bacterium Yellowstone A-Prime)).